We begin with the raw amino-acid sequence, 720 residues long: Translation initiation factor IF-2 (720 aa).

The disordered stretch occupies residues 48–138; it reads KKFKASQAKD…NEVEETKEMP (91 aa). 2 stretches are compositionally biased toward low complexity: residues 60 to 75 and 99 to 113; these read KQNTQNNHQKSNNKQN and KGKQQNKNNKTNKNQ. Positions 114–123 are enriched in basic residues; the sequence is KNNKNKKNNK. Residues 222–391 form the tr-type G domain; it reads ERPAVVTIMG…GLVAEVQELK (170 aa). The segment at 231-238 is G1; it reads GHVDHGKT. Residue 231-238 coordinates GTP; it reads GHVDHGKT. The tract at residues 256-260 is G2; it reads GITQH. Residues 277-280 are G3; sequence DTPG. GTP is bound by residues 277 to 281 and 331 to 334; these read DTPGH and NKID. The G4 stretch occupies residues 331-334; sequence NKID. The segment at 367–369 is G5; it reads SAL.

The protein belongs to the TRAFAC class translation factor GTPase superfamily. Classic translation factor GTPase family. IF-2 subfamily.

It localises to the cytoplasm. One of the essential components for the initiation of protein synthesis. Protects formylmethionyl-tRNA from spontaneous hydrolysis and promotes its binding to the 30S ribosomal subunits. Also involved in the hydrolysis of GTP during the formation of the 70S ribosomal complex. This Staphylococcus epidermidis (strain ATCC 35984 / DSM 28319 / BCRC 17069 / CCUG 31568 / BM 3577 / RP62A) protein is Translation initiation factor IF-2.